Reading from the N-terminus, the 202-residue chain is Small ribosomal subunit protein uS4c (202 aa).

One can recognise an S4 RNA-binding domain in the interval Met-90–Lys-158.

The protein belongs to the universal ribosomal protein uS4 family. Part of the 30S ribosomal subunit. Contacts protein S5. The interaction surface between S4 and S5 is involved in control of translational fidelity.

It is found in the plastid. The protein localises to the chloroplast. One of the primary rRNA binding proteins, it binds directly to 16S rRNA where it nucleates assembly of the body of the 30S subunit. Functionally, with S5 and S12 plays an important role in translational accuracy. The sequence is that of Small ribosomal subunit protein uS4c (rps4) from Marchantia romanica (Liverwort).